Reading from the N-terminus, the 56-residue chain is Large ribosomal subunit protein bL33 (56 aa).

This sequence belongs to the bacterial ribosomal protein bL33 family.

The chain is Large ribosomal subunit protein bL33 (rpmG) from Treponema pallidum (strain Nichols).